The sequence spans 118 residues: uncharacterized protein (118 aa).

3 helical membrane passes run 17–37, 60–80, and 90–110; these read IIII…FAIL, INYT…IMIF, and YIEQ…GSFW.

It is found in the membrane. This is an uncharacterized protein from Acanthamoeba polyphaga mimivirus (APMV).